A 314-amino-acid chain; its full sequence is Ribonuclease Z (314 aa).

Zn(2+) is bound by residues His-62, His-64, Asp-66, His-67, His-144, Asp-215, and His-273. The Proton acceptor role is filled by Asp-66.

Belongs to the RNase Z family. Homodimer. It depends on Zn(2+) as a cofactor.

The enzyme catalyses Endonucleolytic cleavage of RNA, removing extra 3' nucleotides from tRNA precursor, generating 3' termini of tRNAs. A 3'-hydroxy group is left at the tRNA terminus and a 5'-phosphoryl group is left at the trailer molecule.. Its function is as follows. Zinc phosphodiesterase, which displays some tRNA 3'-processing endonuclease activity. Probably involved in tRNA maturation, by removing a 3'-trailer from precursor tRNA. The protein is Ribonuclease Z of Prochlorococcus marinus (strain NATL2A).